The following is a 37-amino-acid chain: GFGGGRGGFGGGRGGFGGGGIGGGGFGGGYGGGKIKG.

Positions 16-37 are disordered; it reads FGGGGIGGGGFGGGYGGGKIKG. Position 36 is a lysine amide (lysine 36).

Expressed in hemocytes (at protein level).

It localises to the secreted. In terms of biological role, antimicrobial protein with activity against Gram-positive and Gram-negative bacteria, filamentous fungus, and yeast. Was tested against Micrococcus luteus A270 (MIC=0.5-1 uM), Echerichia coli SBS 363 (MIC=9-16 uM), Pseudomonas aeruginosa (MIC=0.01-0.3 uM), Aspergillus niger (MIC=3-6 uM), and Candida albicans MDM8 (MIC=1.5-3 uM). Has no hemolytic activity against human erythrocytes. This Tityus serrulatus (Brazilian scorpion) protein is Serrulin.